Reading from the N-terminus, the 318-residue chain is Tyrosine recombinase XerD (318 aa).

Positions 5 to 90 (PSDAKLTGLF…AMRHLYRFLL (86 aa)) constitute a Core-binding (CB) domain. The 200-residue stretch at 111-310 (GLPKVLSIAD…VEERLKSLVR (200 aa)) folds into the Tyr recombinase domain. Active-site residues include Arg161, Lys185, His262, Arg265, and His288. Residue Tyr297 is the O-(3'-phospho-DNA)-tyrosine intermediate of the active site.

Belongs to the 'phage' integrase family. XerD subfamily. Forms a cyclic heterotetrameric complex composed of two molecules of XerC and two molecules of XerD.

It localises to the cytoplasm. Its function is as follows. Site-specific tyrosine recombinase, which acts by catalyzing the cutting and rejoining of the recombining DNA molecules. The XerC-XerD complex is essential to convert dimers of the bacterial chromosome into monomers to permit their segregation at cell division. It also contributes to the segregational stability of plasmids. This Bradyrhizobium diazoefficiens (strain JCM 10833 / BCRC 13528 / IAM 13628 / NBRC 14792 / USDA 110) protein is Tyrosine recombinase XerD.